A 150-amino-acid chain; its full sequence is SsrA-binding protein (150 aa).

It belongs to the SmpB family.

Its subcellular location is the cytoplasm. Functionally, required for rescue of stalled ribosomes mediated by trans-translation. Binds to transfer-messenger RNA (tmRNA), required for stable association of tmRNA with ribosomes. tmRNA and SmpB together mimic tRNA shape, replacing the anticodon stem-loop with SmpB. tmRNA is encoded by the ssrA gene; the 2 termini fold to resemble tRNA(Ala) and it encodes a 'tag peptide', a short internal open reading frame. During trans-translation Ala-aminoacylated tmRNA acts like a tRNA, entering the A-site of stalled ribosomes, displacing the stalled mRNA. The ribosome then switches to translate the ORF on the tmRNA; the nascent peptide is terminated with the 'tag peptide' encoded by the tmRNA and targeted for degradation. The ribosome is freed to recommence translation, which seems to be the essential function of trans-translation. This chain is SsrA-binding protein, found in Borreliella afzelii (strain PKo) (Borrelia afzelii).